A 349-amino-acid chain; its full sequence is MDDRILTSVNLEEDSAEYNLRPQKLNEYIGQSKVKEKMDIFIRAAKKRGEALDHVLFYGPPGLGKTTLANIIAKEMGGNLKVTSGPAIERAGDLAAILTGLSEYDVLFIDEIHRLNRSVEEILYPAMEDYALDIIIGKGAAAKSIRLDLPKFTLIGATTRVGLLTAPLRDRFGVLCPMEFYNDEELKEIIVRSSSILDIDIDEDAALEIAMRSRGTPRIANRLLKRVRDYADVKGRGIVNLDSAKKALNLLEVDDEGFDSIDNKIIQAIVNNFAGGPVGIETLSYFVGEEIDTIEDVYEPYLLQKGFIMRTPRGRMATKKAYEHLKVPFNMKKNGTVNNDQCSFFKKEK.

The segment at 1-181 is large ATPase domain (RuvB-L); it reads MDDRILTSVN…FGVLCPMEFY (181 aa). ATP contacts are provided by residues L20, R21, G62, K65, T66, T67, 128 to 130, R171, Y181, and R218; that span reads EDY. Residue T66 coordinates Mg(2+). The segment at 182-252 is small ATPAse domain (RuvB-S); that stretch reads NDEELKEIIV…SAKKALNLLE (71 aa). The tract at residues 255-349 is head domain (RuvB-H); that stretch reads DEGFDSIDNK…DQCSFFKKEK (95 aa). DNA-binding residues include R310 and R315.

The protein belongs to the RuvB family. In terms of assembly, homohexamer. Forms an RuvA(8)-RuvB(12)-Holliday junction (HJ) complex. HJ DNA is sandwiched between 2 RuvA tetramers; dsDNA enters through RuvA and exits via RuvB. An RuvB hexamer assembles on each DNA strand where it exits the tetramer. Each RuvB hexamer is contacted by two RuvA subunits (via domain III) on 2 adjacent RuvB subunits; this complex drives branch migration. In the full resolvosome a probable DNA-RuvA(4)-RuvB(12)-RuvC(2) complex forms which resolves the HJ.

It is found in the cytoplasm. It catalyses the reaction ATP + H2O = ADP + phosphate + H(+). In terms of biological role, the RuvA-RuvB-RuvC complex processes Holliday junction (HJ) DNA during genetic recombination and DNA repair, while the RuvA-RuvB complex plays an important role in the rescue of blocked DNA replication forks via replication fork reversal (RFR). RuvA specifically binds to HJ cruciform DNA, conferring on it an open structure. The RuvB hexamer acts as an ATP-dependent pump, pulling dsDNA into and through the RuvAB complex. RuvB forms 2 homohexamers on either side of HJ DNA bound by 1 or 2 RuvA tetramers; 4 subunits per hexamer contact DNA at a time. Coordinated motions by a converter formed by DNA-disengaged RuvB subunits stimulates ATP hydrolysis and nucleotide exchange. Immobilization of the converter enables RuvB to convert the ATP-contained energy into a lever motion, pulling 2 nucleotides of DNA out of the RuvA tetramer per ATP hydrolyzed, thus driving DNA branch migration. The RuvB motors rotate together with the DNA substrate, which together with the progressing nucleotide cycle form the mechanistic basis for DNA recombination by continuous HJ branch migration. Branch migration allows RuvC to scan DNA until it finds its consensus sequence, where it cleaves and resolves cruciform DNA. The polypeptide is Holliday junction branch migration complex subunit RuvB (Clostridium acetobutylicum (strain ATCC 824 / DSM 792 / JCM 1419 / IAM 19013 / LMG 5710 / NBRC 13948 / NRRL B-527 / VKM B-1787 / 2291 / W)).